Consider the following 145-residue polypeptide: Thioredoxin C-3 (145 aa).

Residues C25, C28, and H29 each contribute to the heme site. The 112-residue stretch at H29–Q140 folds into the Thioredoxin domain. C65 and C68 are oxidised to a cystine.

It belongs to the thioredoxin family.

Its function is as follows. Participates in various redox reactions through the reversible oxidation of its active center dithiol to a disulfide and catalyzes dithiol-disulfide exchange reactions. This chain is Thioredoxin C-3, found in Corynebacterium nephridii.